Consider the following 371-residue polypeptide: Alginate lyase (371 aa).

The N-terminal stretch at 1-28 (MRRPMTLFKRISSPALLALALFGGAAHA) is a signal peptide. Residues 67 to 68 (SK), 140 to 141 (HT), and Tyr-258 contribute to the substrate site.

Belongs to the polysaccharide lyase 5 family.

The protein localises to the periplasm. It catalyses the reaction Eliminative cleavage of alginate to give oligosaccharides with 4-deoxy-alpha-L-erythro-hex-4-enuronosyl groups at their non-reducing ends and beta-D-mannuronate at their reducing end.. Functionally, catalyzes the depolymerization of alginate by cleaving the beta-1,4 glycosidic bond between two adjacent sugar residues via a beta-elimination mechanism. May serve to degrade mislocalized alginate that is trapped in the periplasmic space. In Pseudomonas putida (strain ATCC 47054 / DSM 6125 / CFBP 8728 / NCIMB 11950 / KT2440), this protein is Alginate lyase.